Here is an 88-residue protein sequence, read N- to C-terminus: UPF0297 protein BT9727_4120 (88 aa).

The protein belongs to the UPF0297 family.

The sequence is that of UPF0297 protein BT9727_4120 from Bacillus thuringiensis subsp. konkukian (strain 97-27).